The following is a 503-amino-acid chain: TGF-beta receptor type-1 (503 aa).

The N-terminal stretch at Met1–Ala29 is a signal peptide. Topologically, residues Leu30–Leu126 are extracellular. Disulfide bonds link Cys32/Cys50, Cys34/Cys37, Cys44/Cys67, Cys82/Cys96, and Cys97/Cys102. A glycan (N-linked (GlcNAc...) asparagine) is linked at Asn41. The helical transmembrane segment at Ala127–Ile147 threads the bilayer. At Cys148–Met503 the chain is on the cytoplasmic side. Ser165 is modified (phosphoserine). The 30-residue stretch at Thr175–Thr204 folds into the GS domain. Residues Thr185 and Thr186 each carry the phosphothreonine; by TGFBR2 modification. A phosphoserine; by TGFBR2 mark is found at Ser187, Ser189, and Ser191. An FKBP1A-binding motif is present at residues Leu193 to Pro194. The 291-residue stretch at Ile205–Leu495 folds into the Protein kinase domain. ATP-binding positions include Ile211 to Val219 and Lys232. Lys268 is covalently cross-linked (Glycyl lysine isopeptide (Lys-Gly) (interchain with G-Cter in ubiquitin)). Catalysis depends on Asp333, which acts as the Proton acceptor. Lys391 is covalently cross-linked (Glycyl lysine isopeptide (Lys-Gly) (interchain with G-Cter in SUMO)).

It belongs to the protein kinase superfamily. TKL Ser/Thr protein kinase family. TGFB receptor subfamily. As to quaternary structure, homodimer; in the endoplasmic reticulum but also at the cell membrane. Heterohexamer; TGFB1, TGFB2 and TGFB3 homodimeric ligands assemble a functional receptor composed of two TGFBR1 and TGFBR2 heterodimers to form a ligand-receptor heterohexamer. The respective affinity of TGBRB1 and TGFBR2 for the ligands may modulate the kinetics of assembly of the receptor and may explain the different biological activities of TGFB1, TGFB2 and TGFB3. Component of a complex composed of TSC22D1 (via N-terminus), TGFBR1 and TGFBR2; the interaction between TSC22D1 and TGFBR1 is inhibited by SMAD7 and promoted by TGFB1. Interacts with CD109; inhibits TGF-beta receptor activation in keratinocytes. Interacts with RBPMS. Interacts (unphosphorylated) with FKBP1A; prevents TGFBR1 phosphorylation by TGFBR2 and stabilizes it in the inactive conformation. Interacts with SMAD2, SMAD3 and ZFYVE9; ZFYVE9 recruits SMAD2 and SMAD3 to the TGF-beta receptor. Interacts with TRAF6 and MAP3K7; induces MAP3K7 activation by TRAF6. Interacts with PARD6A; involved in TGF-beta induced epithelial to mesenchymal transition. Interacts with NEDD4L. Interacts with SMAD7, SMURF1 and SMURF2; SMAD7 recruits NEDD4L, SMURF1 and SMURF2 to the TGF-beta receptor. Interacts with USP15 and VPS39. Interacts with SDCBP (via C-terminus). Interacts with CAV1 and this interaction is impaired in the presence of SDCBP. Interacts with APPL1; interaction is TGF beta dependent; mediates trafficking of the TGFBR1 from the endosomes to the nucleus via microtubules in a TRAF6-dependent manner. Interacts with GPR50; this interaction promotes the constitutive activation of SMAD signaling pathway. Requires Mg(2+) as cofactor. Mn(2+) serves as cofactor. Post-translationally, phosphorylated at basal levels in the absence of ligand. Activated upon phosphorylation by TGFBR2, mainly in the GS domain. Phosphorylation in the GS domain abrogates FKBP1A-binding. In terms of processing, N-Glycosylated. Ubiquitinated; undergoes ubiquitination catalyzed by several E3 ubiquitin ligases including SMURF1, SMURF2 and NEDD4L2. Results in the proteasomal and/or lysosomal degradation of the receptor thereby negatively regulating its activity. Deubiquitinated by USP15, leading to stabilization of the protein and enhanced TGF-beta signal. Its ubiquitination and proteasome-mediated degradation is negatively regulated by SDCBP. Ubiquitinated by BFAR via'Lys-63'-linked ubiquitination at Lys-268, leading to TGF-beta signaling activation.

It is found in the cell membrane. The protein localises to the cell junction. It localises to the tight junction. The protein resides in the membrane raft. Its subcellular location is the cell surface. The catalysed reaction is L-threonyl-[receptor-protein] + ATP = O-phospho-L-threonyl-[receptor-protein] + ADP + H(+). The enzyme catalyses L-seryl-[receptor-protein] + ATP = O-phospho-L-seryl-[receptor-protein] + ADP + H(+). With respect to regulation, kept in an inactive conformation by FKBP1A preventing receptor activation in absence of ligand. CD109 is another inhibitor of the receptor. Transmembrane serine/threonine kinase forming with the TGF-beta type II serine/threonine kinase receptor, TGFBR2, the non-promiscuous receptor for the TGF-beta cytokines TGFB1, TGFB2 and TGFB3. Transduces the TGFB1, TGFB2 and TGFB3 signal from the cell surface to the cytoplasm and is thus regulating a plethora of physiological and pathological processes including cell cycle arrest in epithelial and hematopoietic cells, control of mesenchymal cell proliferation and differentiation, wound healing, extracellular matrix production, immunosuppression and carcinogenesis. The formation of the receptor complex composed of 2 TGFBR1 and 2 TGFBR2 molecules symmetrically bound to the cytokine dimer results in the phosphorylation and the activation of TGFBR1 by the constitutively active TGFBR2. Activated TGFBR1 phosphorylates SMAD2 which dissociates from the receptor and interacts with SMAD4. The SMAD2-SMAD4 complex is subsequently translocated to the nucleus where it modulates the transcription of the TGF-beta-regulated genes. This constitutes the canonical SMAD-dependent TGF-beta signaling cascade. Also involved in non-canonical, SMAD-independent TGF-beta signaling pathways. For instance, TGFBR1 induces TRAF6 autoubiquitination which in turn results in MAP3K7 ubiquitination and activation to trigger apoptosis. Also regulates epithelial to mesenchymal transition through a SMAD-independent signaling pathway through PARD6A phosphorylation and activation. This chain is TGF-beta receptor type-1 (Tgfbr1), found in Mus musculus (Mouse).